We begin with the raw amino-acid sequence, 120 residues long: ATP synthase subunit a (120 aa).

4 consecutive transmembrane segments (helical) span residues 2–22, 29–49, 59–79, and 94–116; these read FFYS…YSYL, FFPF…VGIV, LNIT…LGFY, and IPFV…RSVG.

This sequence belongs to the ATPase A chain family. F-type ATPases have 2 components, CF(1) - the catalytic core - and CF(0) - the membrane proton channel. CF(1) has five subunits: alpha(3), beta(3), gamma(1), delta(1), epsilon(1). CF(0) has three main subunits: a, b and c.

It is found in the mitochondrion inner membrane. In terms of biological role, mitochondrial membrane ATP synthase (F(1)F(0) ATP synthase or Complex V) produces ATP from ADP in the presence of a proton gradient across the membrane which is generated by electron transport complexes of the respiratory chain. F-type ATPases consist of two structural domains, F(1) - containing the extramembraneous catalytic core and F(0) - containing the membrane proton channel, linked together by a central stalk and a peripheral stalk. During catalysis, ATP synthesis in the catalytic domain of F(1) is coupled via a rotary mechanism of the central stalk subunits to proton translocation. Key component of the proton channel; it may play a direct role in the translocation of protons across the membrane. In Naegleria fowleri (Brain eating amoeba), this protein is ATP synthase subunit a (ATP6).